We begin with the raw amino-acid sequence, 96 residues long: Putative pterin-4-alpha-carbinolamine dehydratase (96 aa).

The protein belongs to the pterin-4-alpha-carbinolamine dehydratase family.

The catalysed reaction is (4aS,6R)-4a-hydroxy-L-erythro-5,6,7,8-tetrahydrobiopterin = (6R)-L-erythro-6,7-dihydrobiopterin + H2O. The polypeptide is Putative pterin-4-alpha-carbinolamine dehydratase (Synechocystis sp. (strain ATCC 27184 / PCC 6803 / Kazusa)).